The following is a 237-amino-acid chain: Phosphoribosylaminoimidazole-succinocarboxamide synthase (237 aa).

This sequence belongs to the SAICAR synthetase family.

It catalyses the reaction 5-amino-1-(5-phospho-D-ribosyl)imidazole-4-carboxylate + L-aspartate + ATP = (2S)-2-[5-amino-1-(5-phospho-beta-D-ribosyl)imidazole-4-carboxamido]succinate + ADP + phosphate + 2 H(+). The protein operates within purine metabolism; IMP biosynthesis via de novo pathway; 5-amino-1-(5-phospho-D-ribosyl)imidazole-4-carboxamide from 5-amino-1-(5-phospho-D-ribosyl)imidazole-4-carboxylate: step 1/2. This chain is Phosphoribosylaminoimidazole-succinocarboxamide synthase, found in Escherichia coli O127:H6 (strain E2348/69 / EPEC).